The chain runs to 503 residues: ATP synthase subunit alpha (503 aa).

ATP is bound at residue 169–176 (GDRKTGKT).

It belongs to the ATPase alpha/beta chains family. As to quaternary structure, F-type ATPases have 2 components, CF(1) - the catalytic core - and CF(0) - the membrane proton channel. CF(1) has five subunits: alpha(3), beta(3), gamma(1), delta(1), epsilon(1). CF(0) has three main subunits: a(1), b(2) and c(9-12). The alpha and beta chains form an alternating ring which encloses part of the gamma chain. CF(1) is attached to CF(0) by a central stalk formed by the gamma and epsilon chains, while a peripheral stalk is formed by the delta and b chains.

It localises to the cell membrane. The enzyme catalyses ATP + H2O + 4 H(+)(in) = ADP + phosphate + 5 H(+)(out). In terms of biological role, produces ATP from ADP in the presence of a proton gradient across the membrane. The alpha chain is a regulatory subunit. The protein is ATP synthase subunit alpha of Lactobacillus helveticus (strain DPC 4571).